The primary structure comprises 139 residues: Putative pre-16S rRNA nuclease (139 aa).

It belongs to the YqgF nuclease family.

The protein localises to the cytoplasm. Could be a nuclease involved in processing of the 5'-end of pre-16S rRNA. The sequence is that of Putative pre-16S rRNA nuclease from Legionella pneumophila (strain Paris).